The primary structure comprises 333 residues: Adenosine deaminase (333 aa).

Zn(2+)-binding residues include H12 and H14. H14, D16, and G170 together coordinate substrate. H197 is a binding site for Zn(2+). The active-site Proton donor is E200. Residue D278 coordinates Zn(2+). Substrate is bound at residue D279.

The protein belongs to the metallo-dependent hydrolases superfamily. Adenosine and AMP deaminases family. Adenosine deaminase subfamily. The cofactor is Zn(2+).

The enzyme catalyses adenosine + H2O + H(+) = inosine + NH4(+). It carries out the reaction 2'-deoxyadenosine + H2O + H(+) = 2'-deoxyinosine + NH4(+). Functionally, catalyzes the hydrolytic deamination of adenosine and 2-deoxyadenosine. The sequence is that of Adenosine deaminase from Shigella dysenteriae serotype 1 (strain Sd197).